A 332-amino-acid polypeptide reads, in one-letter code: Aspartate carbamoyltransferase catalytic subunit (332 aa).

A disordered region spans residues Met-1 to Asp-20. Carbamoyl phosphate contacts are provided by Arg-72 and Thr-73. Residue Lys-100 participates in L-aspartate binding. Carbamoyl phosphate-binding residues include Arg-122, His-152, and Gln-155. The L-aspartate site is built by Arg-186 and Arg-241. Carbamoyl phosphate contacts are provided by Gly-282 and Pro-283.

This sequence belongs to the aspartate/ornithine carbamoyltransferase superfamily. ATCase family. As to quaternary structure, heterododecamer (2C3:3R2) of six catalytic PyrB chains organized as two trimers (C3), and six regulatory PyrI chains organized as three dimers (R2).

The catalysed reaction is carbamoyl phosphate + L-aspartate = N-carbamoyl-L-aspartate + phosphate + H(+). Its pathway is pyrimidine metabolism; UMP biosynthesis via de novo pathway; (S)-dihydroorotate from bicarbonate: step 2/3. In terms of biological role, catalyzes the condensation of carbamoyl phosphate and aspartate to form carbamoyl aspartate and inorganic phosphate, the committed step in the de novo pyrimidine nucleotide biosynthesis pathway. This is Aspartate carbamoyltransferase catalytic subunit from Psychrobacter sp. (strain TAD1).